The following is a 276-amino-acid chain: NAD-capped RNA hydrolase NudC (276 aa).

Arg-82 contacts substrate. Residues Cys-112 and Cys-115 each coordinate Zn(2+). Glu-125 contacts substrate. Residues Cys-130 and Cys-133 each contribute to the Zn(2+) site. Residue Tyr-138 participates in substrate binding. The 124-residue stretch at 139–262 (PRISPSMIVL…SIARYLIDVY (124 aa)) folds into the Nudix hydrolase domain. Ala-172, Glu-188, and Glu-192 together coordinate a divalent metal cation. The Nudix box signature appears at 173–194 (GFAEPGESAEDCLIREVREEVQ). 206-213 (QCWPFPHS) is a substrate binding site. A divalent metal cation is bound at residue Glu-233. Ala-255 serves as a coordination point for substrate.

It belongs to the Nudix hydrolase family. NudC subfamily. In terms of assembly, homodimer. Mg(2+) is required as a cofactor. The cofactor is Mn(2+). Requires Zn(2+) as cofactor.

It carries out the reaction a 5'-end NAD(+)-phospho-ribonucleoside in mRNA + H2O = a 5'-end phospho-adenosine-phospho-ribonucleoside in mRNA + beta-nicotinamide D-ribonucleotide + 2 H(+). The catalysed reaction is NAD(+) + H2O = beta-nicotinamide D-ribonucleotide + AMP + 2 H(+). The enzyme catalyses NADH + H2O = reduced beta-nicotinamide D-ribonucleotide + AMP + 2 H(+). MRNA decapping enzyme that specifically removes the nicotinamide adenine dinucleotide (NAD) cap from a subset of mRNAs by hydrolyzing the diphosphate linkage to produce nicotinamide mononucleotide (NMN) and 5' monophosphate mRNA. The NAD-cap is present at the 5'-end of some mRNAs and stabilizes RNA against 5'-processing. Has preference for mRNAs with a 5'-end purine. Catalyzes the hydrolysis of a broad range of dinucleotide pyrophosphates. The protein is NAD-capped RNA hydrolase NudC of Pseudomonas fluorescens (strain Pf0-1).